The following is a 327-amino-acid chain: Clavesin-2 (327 aa).

A CRAL-TRIO domain is found at 96 to 257; that stretch reads IKQALKDGFP…EFGGMLPPYD (162 aa). Positions 288–327 are disordered; that stretch reads VDKELSPKSMKRSQSVVDPTALKRMDKSEEENMQPLLSLD. A Phosphoserine modification is found at Ser325.

Forms a complex with clathrin heavy chain and gamma-adaptin. Expressed in brain with no expression detected in non-neuronal tissues (at protein level).

It localises to the golgi apparatus. It is found in the trans-Golgi network membrane. The protein resides in the early endosome membrane. Its subcellular location is the cytoplasmic vesicle. The protein localises to the clathrin-coated vesicle. Its function is as follows. Required for normal morphology of late endosomes and/or lysosomes in neurons. Binds phosphatidylinositol 3,5-bisphosphate (PtdIns(3,5)P2). The chain is Clavesin-2 from Rattus norvegicus (Rat).